Reading from the N-terminus, the 393-residue chain is Histidinol dehydrogenase (393 aa).

NAD(+)-binding residues include Tyr-112, Gln-171, and Asn-194. Residues Thr-217, Gln-239, and His-242 each contribute to the substrate site. Zn(2+) is bound by residues Gln-239 and His-242. Residues Glu-293 and His-294 each act as proton acceptor in the active site. Residues His-294, Asp-326, Glu-379, and His-384 each coordinate substrate. Zn(2+) is bound at residue Asp-326. His-384 is a binding site for Zn(2+).

It belongs to the histidinol dehydrogenase family. It depends on Zn(2+) as a cofactor.

It catalyses the reaction L-histidinol + 2 NAD(+) + H2O = L-histidine + 2 NADH + 3 H(+). Its pathway is amino-acid biosynthesis; L-histidine biosynthesis; L-histidine from 5-phospho-alpha-D-ribose 1-diphosphate: step 9/9. Functionally, catalyzes the sequential NAD-dependent oxidations of L-histidinol to L-histidinaldehyde and then to L-histidine. The protein is Histidinol dehydrogenase of Sulfolobus acidocaldarius (strain ATCC 33909 / DSM 639 / JCM 8929 / NBRC 15157 / NCIMB 11770).